A 450-amino-acid polypeptide reads, in one-letter code: Signal recognition particle protein (450 aa).

Residues 106 to 113, 188 to 192, and 246 to 249 each bind GTP; these read GLQGSGKT, DTAGR, and TKLD.

Belongs to the GTP-binding SRP family. SRP54 subfamily. Part of the signal recognition particle protein translocation system, which is composed of SRP and FtsY.

It localises to the cytoplasm. The catalysed reaction is GTP + H2O = GDP + phosphate + H(+). Functionally, involved in targeting and insertion of nascent membrane proteins into the cytoplasmic membrane. Binds to the hydrophobic signal sequence of the ribosome-nascent chain (RNC) as it emerges from the ribosomes. The SRP-RNC complex is then targeted to the cytoplasmic membrane where it interacts with the SRP receptor FtsY. The chain is Signal recognition particle protein from Mycoplasma pneumoniae (strain ATCC 29342 / M129 / Subtype 1) (Mycoplasmoides pneumoniae).